Here is a 378-residue protein sequence, read N- to C-terminus: Ribosomal RNA large subunit methyltransferase G (378 aa).

The protein belongs to the methyltransferase superfamily. RlmG family.

The protein localises to the cytoplasm. The catalysed reaction is guanosine(1835) in 23S rRNA + S-adenosyl-L-methionine = N(2)-methylguanosine(1835) in 23S rRNA + S-adenosyl-L-homocysteine + H(+). Functionally, specifically methylates the guanine in position 1835 (m2G1835) of 23S rRNA. This Shewanella baltica (strain OS195) protein is Ribosomal RNA large subunit methyltransferase G.